Consider the following 368-residue polypeptide: Protein NDRG2 (368 aa).

Residues 330–339 are compositionally biased toward low complexity; it reads SLSSSYSMEG. Residues 330–368 are disordered; that stretch reads SLSSSYSMEGSRSRSRTLSQGSQGGQLPPSPSNTMEVSC.

It belongs to the NDRG family.

Its subcellular location is the cytoplasm. Functionally, contributes to the regulation of the Wnt signaling pathway. Down-regulates CTNNB1-mediated transcriptional activation of target genes. May be involved in neuron differentiation. The protein is Protein NDRG2 (ndrg2) of Danio rerio (Zebrafish).